A 522-amino-acid chain; its full sequence is Secreted RxLR effector protein 105 (522 aa).

The first 21 residues, 1–21 (MRGPCSVITALLVVASSQIAA), serve as a signal peptide directing secretion. The RxLR-dEER signature appears at 48 to 63 (RYLRGSQHVLDSNEER).

This sequence belongs to the RxLR effector family.

The protein resides in the secreted. It is found in the host nucleus. It localises to the host cytoplasm. Functionally, secreted effector that dos not suppress the host cell death induced by cell death-inducing proteins. The chain is Secreted RxLR effector protein 105 from Plasmopara viticola (Downy mildew of grapevine).